A 152-amino-acid polypeptide reads, in one-letter code: Cell division protein SepF (152 aa).

Positions 23 to 32 are enriched in basic and acidic residues; the sequence is EVAREPEPMQ. Residues 23-42 are disordered; it reads EVAREPEPMQKKTKKEKPSK.

Belongs to the SepF family. As to quaternary structure, homodimer. Interacts with FtsZ.

Its subcellular location is the cytoplasm. In terms of biological role, cell division protein that is part of the divisome complex and is recruited early to the Z-ring. Probably stimulates Z-ring formation, perhaps through the cross-linking of FtsZ protofilaments. Its function overlaps with FtsA. This Listeria innocua serovar 6a (strain ATCC BAA-680 / CLIP 11262) protein is Cell division protein SepF.